The primary structure comprises 142 residues: ATP synthase epsilon chain (142 aa).

The protein belongs to the ATPase epsilon chain family. F-type ATPases have 2 components, CF(1) - the catalytic core - and CF(0) - the membrane proton channel. CF(1) has five subunits: alpha(3), beta(3), gamma(1), delta(1), epsilon(1). CF(0) has three main subunits: a, b and c.

It localises to the cell inner membrane. Produces ATP from ADP in the presence of a proton gradient across the membrane. In Shewanella piezotolerans (strain WP3 / JCM 13877), this protein is ATP synthase epsilon chain.